The following is a 271-amino-acid chain: Short-chain dehydrogenase ptmH (271 aa).

Residues Ile8, Thr34, Lys40, Asp56, Asn84, Tyr148, Lys152, Val181, and Thr183 each contribute to the NADP(+) site. Catalysis depends on Tyr148, which acts as the Proton acceptor. The active-site Lowers pKa of active site Tyr is Lys152.

The protein belongs to the short-chain dehydrogenases/reductases (SDR) family.

The protein operates within secondary metabolite biosynthesis. In terms of biological role, short-chain dehydrogenase; part of the gene cluster that mediates the biosynthesis of the indole diterpenes penitrems. The geranylgeranyl diphosphate (GGPP) synthase ptmG catalyzes the first step in penitrem biosynthesis via conversion of farnesyl pyrophosphate and isopentyl pyrophosphate into geranylgeranyl pyrophosphate (GGPP). Condensation of indole-3-glycerol phosphate with GGPP by the prenyl transferase ptmC then forms 3-geranylgeranylindole (3-GGI). Epoxidation by the FAD-dependent monooxygenase ptmM leads to a epoxidized-GGI that is substrate of the terpene cyclase ptmB for cyclization to yield paspaline. Paspaline is subsequently converted to 13-desoxypaxilline by the cytochrome P450 monooxygenase ptmP, the latter being then converted to paxilline by the cytochrome P450 monooxygenase ptmQ. Paxilline is converted to beta-paxitriol via C-10 ketoreduction by the short-chain dehydrogenase ptmH which can be monoprenylated at the C-20 by the indole diterpene prenyltransferase ptmD. A two-step elimination (acetylation and elimination) process performed by the O-acetyltransferase ptmV and ptmI leads to the production of the prenylated form of penijanthine. The FAD-linked oxidoreductase ptmO then converts the prenylated form of penijanthine into PC-M5 which is in turn transformed into PC-M4 by the aromatic dimethylallyltransferase ptmE. Five sequential oxidative transformations performed by the cytochrome P450 monooxygenases ptmK, ptmU, ptmL, ptmN and ptmJ yield the various penitrem compounds. PtmK, ptmU and ptmM are involved in the formation of the key bicyclic ring of penitrem C via the formation of the intermediates secopenitrem D and penitrem D. PtmL catalyzes the epoxidation of penitrem D and C to yield penitrem B and F, respectively. PtmJ catalyzes the last benzylic hydroxylation to convert penitrem B to prenitrem E and penitrem F to penitrem A. The sequence is that of Short-chain dehydrogenase ptmH from Penicillium ochrochloron.